A 314-amino-acid chain; its full sequence is E3 ubiquitin-protein ligase SINA-like 11 (314 aa).

The span at 1–12 (MEDSNSHPQNQT) shows a compositional bias: polar residues. Residues 1–31 (MEDSNSHPQNQTSKRKSSHPQKKQRMENETR) are disordered. Positions 13–23 (SKRKSSHPQKK) are enriched in basic residues. Residues 43-81 (CPVCFEPLTIPTFQCDDGHIVCNFCFAKVSNKCPGPGCD) form an RING-type; degenerate zinc finger. The SBD stretch occupies residues 95 to 280 (VLESAFVPCQ…PANEVQQVTI (186 aa)). An SIAH-type zinc finger spans residues 98–156 (SAFVPCQNTEFGCTKSVSYEKVSSHEKECNYSQCSCPNLECNYTGSYNIIYGHFMRRHL). Zn(2+) is bound by residues Cys103, Cys110, His122, Cys126, Cys133, Cys138, His150, and His155.

This sequence belongs to the SINA (Seven in absentia) family.

The catalysed reaction is S-ubiquitinyl-[E2 ubiquitin-conjugating enzyme]-L-cysteine + [acceptor protein]-L-lysine = [E2 ubiquitin-conjugating enzyme]-L-cysteine + N(6)-ubiquitinyl-[acceptor protein]-L-lysine.. Its pathway is protein modification; protein ubiquitination. In terms of biological role, E3 ubiquitin-protein ligase that mediates ubiquitination and subsequent proteasomal degradation of target proteins. E3 ubiquitin ligases accept ubiquitin from an E2 ubiquitin-conjugating enzyme in the form of a thioester and then directly transfers the ubiquitin to targeted substrates. It probably triggers the ubiquitin-mediated degradation of different substrates. The sequence is that of E3 ubiquitin-protein ligase SINA-like 11 from Arabidopsis thaliana (Mouse-ear cress).